The following is a 155-amino-acid chain: Ribonuclease H (155 aa).

Residues 1–142 (MLKQVEIFTD…CDELARAAAS (142 aa)) enclose the RNase H type-1 domain. Mg(2+)-binding residues include D10, E48, D70, and D134.

This sequence belongs to the RNase H family. Monomer. Requires Mg(2+) as cofactor.

It is found in the cytoplasm. It catalyses the reaction Endonucleolytic cleavage to 5'-phosphomonoester.. Its function is as follows. Endonuclease that specifically degrades the RNA of RNA-DNA hybrids. The protein is Ribonuclease H of Klebsiella pneumoniae (strain 342).